The sequence spans 654 residues: Probable replication restart protein PriA (654 aa).

Residues Cys-367, Cys-370, Cys-376, Cys-379, Cys-395, Cys-398, Cys-407, and Cys-410 each contribute to the Zn(2+) site.

This sequence belongs to the helicase family. PriA subfamily. Component of the replication restart primosome. Zn(2+) is required as a cofactor.

Functionally, initiates the restart of stalled replication forks, which reloads the replicative helicase on sites other than the origin of replication. Recognizes and binds to abandoned replication forks and remodels them to uncover a helicase loading site. Promotes assembly of the primosome at these replication forks. The chain is Probable replication restart protein PriA from Mycobacterium tuberculosis (strain CDC 1551 / Oshkosh).